A 300-amino-acid polypeptide reads, in one-letter code: 4-hydroxy-tetrahydrodipicolinate synthase (300 aa).

Pyruvate is bound at residue threonine 45. The active-site Proton donor/acceptor is tyrosine 140. Residue lysine 169 is the Schiff-base intermediate with substrate of the active site. Valine 210 is a binding site for pyruvate.

It belongs to the DapA family. Homotetramer; dimer of dimers.

The protein resides in the cytoplasm. It carries out the reaction L-aspartate 4-semialdehyde + pyruvate = (2S,4S)-4-hydroxy-2,3,4,5-tetrahydrodipicolinate + H2O + H(+). The protein operates within amino-acid biosynthesis; L-lysine biosynthesis via DAP pathway; (S)-tetrahydrodipicolinate from L-aspartate: step 3/4. Catalyzes the condensation of (S)-aspartate-beta-semialdehyde [(S)-ASA] and pyruvate to 4-hydroxy-tetrahydrodipicolinate (HTPA). This is 4-hydroxy-tetrahydrodipicolinate synthase from Helicobacter acinonychis (strain Sheeba).